The following is a 501-amino-acid chain: NAD(P)H-quinone oxidoreductase chain 4, chloroplastic (501 aa).

14 consecutive transmembrane segments (helical) span residues 4–24, 35–55, 87–107, 113–133, 134–154, 167–187, 211–231, 242–262, 274–294, 310–330, 331–351, 386–406, 416–436, and 464–484; these read FPWL…IPFF, YTLG…CYYF, IGLI…AWPV, LFYF…ASQD, ILLF…LLCI, FILY…TMGF, IILY…FPLH, HYST…YGLI, SIFA…AALI, ISHM…GLNG, AILQ…LAGI, LALP…GIVV, ILVT…LLSM, and IFIL…PNSV.

This sequence belongs to the complex I subunit 4 family.

It localises to the plastid. The protein localises to the chloroplast thylakoid membrane. The enzyme catalyses a plastoquinone + NADH + (n+1) H(+)(in) = a plastoquinol + NAD(+) + n H(+)(out). It catalyses the reaction a plastoquinone + NADPH + (n+1) H(+)(in) = a plastoquinol + NADP(+) + n H(+)(out). The polypeptide is NAD(P)H-quinone oxidoreductase chain 4, chloroplastic (Physcomitrium patens (Spreading-leaved earth moss)).